An 82-amino-acid polypeptide reads, in one-letter code: Small ribosomal subunit protein uS17 (82 aa).

Belongs to the universal ribosomal protein uS17 family. As to quaternary structure, part of the 30S ribosomal subunit.

Its function is as follows. One of the primary rRNA binding proteins, it binds specifically to the 5'-end of 16S ribosomal RNA. In Shewanella sp. (strain MR-7), this protein is Small ribosomal subunit protein uS17.